A 193-amino-acid chain; its full sequence is uncharacterized protein (193 aa).

A coiled-coil region spans residues 86-181 (TKQRELLEIL…QVEEVQAEVG (96 aa)).

This is an uncharacterized protein from Streptococcus pyogenes serotype M6 (strain ATCC BAA-946 / MGAS10394).